The following is a 1111-amino-acid chain: ATP-dependent DNA helicase mph1 (1111 aa).

Acidic residues-rich tracts occupy residues 1–18 (MSVS…EIDD) and 47–65 (VFDE…DEFQ). Disordered stretches follow at residues 1-81 (MSVS…EDVE), 101-144 (FVTQ…HQPD), 210-240 (AFDS…RTNR), and 259-280 (IPSQ…PTHH). Composition is skewed to polar residues over residues 132-143 (PTTTTVDASHQP) and 215-238 (LSLS…QFRT). Residues 306 to 474 (IAQRGLFHNL…AVIDGLGIAK (169 aa)) enclose the Helicase ATP-binding domain. Position 319-326 (319-326 (LPTGLGKT)) interacts with ATP. A DEAH box motif is present at residues 422-425 (DEAH). Residues 644 to 818 (YLKQVVLNHF…GTRFTFHDDT (175 aa)) form the Helicase C-terminal domain. Disordered stretches follow at residues 836-898 (IDIP…RKPT), 998-1047 (SVLS…CTPE), and 1092-1111 (AERH…DTEE). Residues 852 to 864 (KRARPPKRPPKKF) show a composition bias toward basic residues.

It belongs to the DEAD box helicase family. DEAH subfamily. FANCM sub-subfamily. In terms of assembly, interacts with the MHF histone-fold complex to form the FANCM-MHF complex.

It localises to the nucleus. It catalyses the reaction ATP + H2O = ADP + phosphate + H(+). ATP-dependent DNA helicase involved in DNA damage repair by homologous recombination and in genome maintenance. Capable of unwinding D-loops. Plays a role in limiting crossover recombinants during mitotic DNA double-strand break (DSB) repair. Component of a FANCM-MHF complex which promotes gene conversion at blocked replication forks, probably by reversal of the stalled fork. The protein is ATP-dependent DNA helicase mph1 of Neosartorya fischeri (strain ATCC 1020 / DSM 3700 / CBS 544.65 / FGSC A1164 / JCM 1740 / NRRL 181 / WB 181) (Aspergillus fischerianus).